Reading from the N-terminus, the 183-residue chain is Photosystem I assembly protein Ycf4 (183 aa).

2 helical membrane passes run Tyr-21–Leu-43 and Phe-58–Trp-80.

Belongs to the Ycf4 family.

Its subcellular location is the plastid. The protein resides in the chloroplast thylakoid membrane. Its function is as follows. Seems to be required for the assembly of the photosystem I complex. The sequence is that of Photosystem I assembly protein Ycf4 from Nephroselmis olivacea (Green alga).